Consider the following 446-residue polypeptide: Acyl-lipid (8-3)-desaturase (446 aa).

Residues 6 to 82 (GKTFTWEELA…MKKYYVGTLV (77 aa)) form the Cytochrome b5 heme-binding domain. Heme contacts are provided by H41 and H64. The next 2 membrane-spanning stretches (helical) occupy residues 125–145 (ALIF…PFVV) and 150–170 (LQVV…LNPL). The Histidine box-1 signature appears at 171–175 (HDASH). Residues 207–212 (HMLGHH) carry the Histidine box-2 motif. The Histidine box-3 signature appears at 387–391 (QAVHH).

The protein belongs to the fatty acid desaturase type 1 family. Fe(2+) is required as a cofactor.

The protein localises to the membrane. The enzyme catalyses an (8Z,11Z,14Z)-icosatrienoyl-containing glycerolipid + 2 Fe(II)-[cytochrome b5] + O2 + 2 H(+) = (5Z,8Z,11Z,14Z)-eicosatetraenoyl-containing glycerolipid + 2 Fe(III)-[cytochrome b5] + 2 H2O. It carries out the reaction an (8Z,11Z,14Z,17Z)-eicosatetraenoyl-containing glycerolipid + 2 Fe(II)-[cytochrome b5] + O2 + 2 H(+) = a (5Z,8Z,11Z,14Z,17Z)-eicosapentaenoyl-containing glycerolipid + 2 Fe(III)-[cytochrome b5] + 2 H2O. In terms of biological role, fatty acid desaturase that introduces a cis double bond at the 5-position in 20-carbon polyunsaturated fatty acids incorporated in a glycerolipid that contain a Delta(8) double bond. Involved in the conversion of di-homo-Delta-linolenic acid to arachidonic acid. Essential in the production of eicosanoids. The chain is Acyl-lipid (8-3)-desaturase (DES1) from Mortierella alpina (Oleaginous fungus).